The following is a 190-amino-acid chain: Imidazoleglycerol-phosphate dehydratase (190 aa).

It belongs to the imidazoleglycerol-phosphate dehydratase family.

Its subcellular location is the cytoplasm. The enzyme catalyses D-erythro-1-(imidazol-4-yl)glycerol 3-phosphate = 3-(imidazol-4-yl)-2-oxopropyl phosphate + H2O. It functions in the pathway amino-acid biosynthesis; L-histidine biosynthesis; L-histidine from 5-phospho-alpha-D-ribose 1-diphosphate: step 6/9. In Methanococcus maripaludis (strain C5 / ATCC BAA-1333), this protein is Imidazoleglycerol-phosphate dehydratase.